A 509-amino-acid chain; its full sequence is Fumarate hydratase, mitochondrial (509 aa).

The transit peptide at 1 to 43 (MYRSARSLHRFSASLSDLRAAQRSIKARNVCPAPGLRHQTVRM) directs the protein to the mitochondrion. Substrate is bound by residues 144-146 (SGT), 175-178 (HPND), 185-187 (SSN), and T233. H234 (proton donor/acceptor) is an active-site residue. S364 is an active-site residue. Residues S365 and 370-372 (KVN) contribute to the substrate site.

This sequence belongs to the class-II fumarase/aspartase family. Fumarase subfamily. In terms of assembly, homotetramer.

It is found in the mitochondrion. Its subcellular location is the cytoplasm. The protein localises to the cytosol. It localises to the nucleus. The protein resides in the chromosome. It carries out the reaction (S)-malate = fumarate + H2O. The protein operates within carbohydrate metabolism; tricarboxylic acid cycle; (S)-malate from fumarate: step 1/1. In terms of biological role, catalyzes the reversible stereospecific interconversion of fumarate to L-malate. Experiments in other species have demonstrated that specific isoforms of this protein act in defined pathways and favor one direction over the other. Functionally, catalyzes the hydration of fumarate to L-malate in the tricarboxylic acid (TCA) cycle to facilitate a transition step in the production of energy in the form of NADH. Catalyzes the dehydration of L-malate to fumarate. Fumarate metabolism in the cytosol plays a role during urea cycle and arginine metabolism; fumarate being a by-product of the urea cycle and amino-acid catabolism. Also plays a role in DNA repair by promoting non-homologous end-joining (NHEJ). In response to DNA damage translocates to the nucleus and accumulates at DNA double-strand breaks (DSBs): acts by catalyzing formation of fumarate. This chain is Fumarate hydratase, mitochondrial, found in Danio rerio (Zebrafish).